Reading from the N-terminus, the 295-residue chain is Septu protein PtuB (295 aa).

In terms of biological role, component of antiviral defense system Septu type II, composed of PtuA and PtuB. Expression of Septu type II in B.subtilis (strain BEST7003) confers resistance to phages SBSphiC and SpBeta. May be a nuclease. The protein is Septu protein PtuB of Bacillus mycoides (strain KBAB4) (Bacillus weihenstephanensis).